Here is a 329-residue protein sequence, read N- to C-terminus: Mitochondrial glycine transporter (329 aa).

3 Solcar repeats span residues 19-103 (SKTT…LRQP), 130-214 (LSNW…LKRH), and 232-316 (SSSS…LILR). The next 6 membrane-spanning stretches (helical) occupy residues 25-50 (FAAG…TRVQ), 78-104 (GTLP…RQPL), 136-161 (LGTG…VRYE), 189-212 (GFGA…EQLK), 236-262 (INFI…KTRL), and 291-309 (GLGL…AWTV).

It belongs to the mitochondrial carrier (TC 2.A.29) family. SLC25A38 subfamily.

It is found in the mitochondrion inner membrane. The catalysed reaction is glycine(in) = glycine(out). Its function is as follows. Mitochondrial glycine transporter that imports glycine into the mitochondrial matrix. Plays an important role in providing glycine for the first enzymatic step in heme biosynthesis, the condensation of glycine with succinyl-CoA to produce 5-aminolevulinate (ALA) in the mitochondrial matrix. The polypeptide is Mitochondrial glycine transporter (Aspergillus terreus (strain NIH 2624 / FGSC A1156)).